The following is a 275-amino-acid chain: 3-methyl-2-oxobutanoate hydroxymethyltransferase (275 aa).

Residues aspartate 49 and aspartate 88 each coordinate Mg(2+). 3-methyl-2-oxobutanoate is bound by residues 49-50 (DS), aspartate 88, and lysine 118. Glutamate 120 serves as a coordination point for Mg(2+). Glutamate 187 serves as the catalytic Proton acceptor.

Belongs to the PanB family. In terms of assembly, homodecamer; pentamer of dimers. Mg(2+) serves as cofactor.

Its subcellular location is the cytoplasm. The catalysed reaction is 3-methyl-2-oxobutanoate + (6R)-5,10-methylene-5,6,7,8-tetrahydrofolate + H2O = 2-dehydropantoate + (6S)-5,6,7,8-tetrahydrofolate. It participates in cofactor biosynthesis; (R)-pantothenate biosynthesis; (R)-pantoate from 3-methyl-2-oxobutanoate: step 1/2. Functionally, catalyzes the reversible reaction in which hydroxymethyl group from 5,10-methylenetetrahydrofolate is transferred onto alpha-ketoisovalerate to form ketopantoate. This is 3-methyl-2-oxobutanoate hydroxymethyltransferase from Brucella suis (strain ATCC 23445 / NCTC 10510).